The sequence spans 653 residues: Transcription factor Ken 1 (653 aa).

The BTB domain occupies 35 to 103 (TDLLLICDGK…LYSGQVYVRS (69 aa)). Disordered regions lie at residues 126-215 (NSDG…DRDR), 234-305 (NNHP…SDDA), 429-451 (LSNNNNSSSNNNNNNNRIRPPSA), and 512-534 (ELSARASAAGGGGGGSGGNGSGS). Positions 145-157 (NRNTEGITGSSVV) are enriched in polar residues. Positions 251-272 (GHHHHHHHHHHHRQLHQIKTRS) are enriched in basic residues. Polar residues predominate over residues 286–299 (SDPVNLSIVKQQQD). Residues 430-444 (SNNNNSSSNNNNNNN) are compositionally biased toward low complexity. The span at 520–534 (AGGGGGGSGGNGSGS) shows a compositional bias: gly residues. C2H2-type zinc fingers lie at residues 555 to 577 (YRCEYCGKTFGMSWNLKTHLRVH), 583 to 606 (FACRLCVAMFKQKAHLLKHLCSVH), and 619 to 641 (YTCCFCSLVFETLQELVRHLSGH).

Its subcellular location is the nucleus. Functionally, transcription factor required for terminalia development. Negative regulator of the JAK/STAT pathway: represses JAK/STAT-dependent expression of ventral veins lacking (vvl) in the posterior spiracles. This chain is Transcription factor Ken 1, found in Culex quinquefasciatus (Southern house mosquito).